Here is a 348-residue protein sequence, read N- to C-terminus: Galactose-1-phosphate uridylyltransferase (348 aa).

28–31 (RAKR) is a binding site for UDP-alpha-D-glucose. Residues Cys-52 and Cys-55 each contribute to the Zn(2+) site. UDP-alpha-D-glucose contacts are provided by residues Val-61 and 77–78 (ND). His-115 is a Zn(2+) binding site. Residues Asn-153 and 159-161 (GCS) each bind UDP-alpha-D-glucose. Residue His-164 coordinates Zn(2+). The active-site Tele-UMP-histidine intermediate is the His-166. Gln-168 is a binding site for UDP-alpha-D-glucose. Positions 182, 281, 296, and 298 each coordinate Fe cation. Residues 311 to 312 (KF), 316 to 317 (YE), and Gln-323 each bind UDP-alpha-D-glucose.

Belongs to the galactose-1-phosphate uridylyltransferase type 1 family. Zn(2+) serves as cofactor.

The enzyme catalyses alpha-D-galactose 1-phosphate + UDP-alpha-D-glucose = alpha-D-glucose 1-phosphate + UDP-alpha-D-galactose. It functions in the pathway carbohydrate metabolism; galactose metabolism. This is Galactose-1-phosphate uridylyltransferase (galT) from Salmonella typhimurium (strain LT2 / SGSC1412 / ATCC 700720).